A 466-amino-acid polypeptide reads, in one-letter code: 23S rRNA (uracil(1939)-C(5))-methyltransferase RlmD (466 aa).

The region spanning 1-54 is the TRAM domain; it reads MVDVLNIESLDLEARGIAHRDGKVLFVEGALPGERVTVQTVRRKPSYEIAKVEE. Positions 67, 73, 76, and 155 each coordinate [4Fe-4S] cluster. 6 residues coordinate S-adenosyl-L-methionine: Gln-264, Phe-293, Asn-298, Glu-314, Asn-342, and Asp-363. The active-site Nucleophile is Cys-393.

It belongs to the class I-like SAM-binding methyltransferase superfamily. RNA M5U methyltransferase family. RlmD subfamily.

It catalyses the reaction uridine(1939) in 23S rRNA + S-adenosyl-L-methionine = 5-methyluridine(1939) in 23S rRNA + S-adenosyl-L-homocysteine + H(+). Its function is as follows. Catalyzes the formation of 5-methyl-uridine at position 1939 (m5U1939) in 23S rRNA. The protein is 23S rRNA (uracil(1939)-C(5))-methyltransferase RlmD of Bordetella parapertussis (strain 12822 / ATCC BAA-587 / NCTC 13253).